Reading from the N-terminus, the 117-residue chain is DNA-directed RNA polymerase II subunit RPB11 (117 aa).

Belongs to the archaeal Rpo11/eukaryotic RPB11/RPC19 RNA polymerase subunit family. Component of the RNA polymerase II (Pol II) complex consisting of 12 subunits.

Its subcellular location is the nucleus. Functionally, DNA-dependent RNA polymerase catalyzes the transcription of DNA into RNA using the four ribonucleoside triphosphates as substrates. Component of RNA polymerase II which synthesizes mRNA precursors and many functional non-coding RNAs. Pol II is the central component of the basal RNA polymerase II transcription machinery. It is composed of mobile elements that move relative to each other. RPB11 is part of the core element with the central large cleft. This Drosophila melanogaster (Fruit fly) protein is DNA-directed RNA polymerase II subunit RPB11.